A 198-amino-acid polypeptide reads, in one-letter code: CASP-like protein 1U1 (198 aa).

Residues 1–30 are Cytoplasmic-facing; that stretch reads MSDTPVVVIPRKGYVDGHHGYHHSYHSGLN. A helical membrane pass occupies residues 31 to 51; that stretch reads LLLRLLQAFATAAAVIVMLLA. Topologically, residues 52-73 are extracellular; sequence TQTEFTRYGEVRGRWRDYPAYK. Residues 74-94 form a helical membrane-spanning segment; that stretch reads WFIIANAVVFVYALLATLVAC. Residues 95–117 are Cytoplasmic-facing; that stretch reads CALIARRGPLSYSPSAWLTFLLD. A helical membrane pass occupies residues 118–138; it reads FVAASALMSAASAALAVALIA. Residues 139 to 165 are Extracellular-facing; the sequence is RNGQNLQGQHYWPTFCNYVTRFCDYAQ. A helical membrane pass occupies residues 166–186; it reads GAIIASFCGFGLLALSTLLAA. The Cytoplasmic portion of the chain corresponds to 187–198; sequence SALHHLAWHRLH.

Belongs to the Casparian strip membrane proteins (CASP) family. As to quaternary structure, homodimer and heterodimers.

The protein resides in the cell membrane. This is CASP-like protein 1U1 from Physcomitrium patens (Spreading-leaved earth moss).